We begin with the raw amino-acid sequence, 159 residues long: SsrA-binding protein (159 aa).

Residues 132–159 are disordered; sequence KDFDKRHTEKERDSDREIQRAMRHGKDD.

It belongs to the SmpB family.

The protein localises to the cytoplasm. Functionally, required for rescue of stalled ribosomes mediated by trans-translation. Binds to transfer-messenger RNA (tmRNA), required for stable association of tmRNA with ribosomes. tmRNA and SmpB together mimic tRNA shape, replacing the anticodon stem-loop with SmpB. tmRNA is encoded by the ssrA gene; the 2 termini fold to resemble tRNA(Ala) and it encodes a 'tag peptide', a short internal open reading frame. During trans-translation Ala-aminoacylated tmRNA acts like a tRNA, entering the A-site of stalled ribosomes, displacing the stalled mRNA. The ribosome then switches to translate the ORF on the tmRNA; the nascent peptide is terminated with the 'tag peptide' encoded by the tmRNA and targeted for degradation. The ribosome is freed to recommence translation, which seems to be the essential function of trans-translation. This Pseudomonas aeruginosa (strain LESB58) protein is SsrA-binding protein.